Consider the following 199-residue polypeptide: Protein GrpE (199 aa).

The span at M1–N24 shows a compositional bias: basic and acidic residues. The tract at residues M1–E52 is disordered.

Belongs to the GrpE family. Homodimer.

It localises to the cytoplasm. Participates actively in the response to hyperosmotic and heat shock by preventing the aggregation of stress-denatured proteins, in association with DnaK and GrpE. It is the nucleotide exchange factor for DnaK and may function as a thermosensor. Unfolded proteins bind initially to DnaJ; upon interaction with the DnaJ-bound protein, DnaK hydrolyzes its bound ATP, resulting in the formation of a stable complex. GrpE releases ADP from DnaK; ATP binding to DnaK triggers the release of the substrate protein, thus completing the reaction cycle. Several rounds of ATP-dependent interactions between DnaJ, DnaK and GrpE are required for fully efficient folding. This chain is Protein GrpE, found in Legionella pneumophila.